Here is a 965-residue protein sequence, read N- to C-terminus: Aminopeptidase N (965 aa).

Residues 1-8 (MAKGFYIS) lie on the Cytoplasmic side of the membrane. The chain crosses the membrane as a helical; Signal-anchor for type II membrane protein span at residues 9 to 32 (KALGILAILLGVAAVATIIALSVV). Positions 33–65 (YAQEKNKNAERGTAAPTSPTGPTTTSATTLDQS) are cytosolic Ser/Thr-rich junction. Over 33–965 (YAQEKNKNAE…VVLNWFKDHS (933 aa)) the chain is Extracellular. Positions 40–65 (NAERGTAAPTSPTGPTTTSATTLDQS) are disordered. The segment covering 44 to 61 (GTAAPTSPTGPTTTSATT) has biased composition (low complexity). A metalloprotease region spans residues 66 to 965 (KPWNRYRLPT…VVLNWFKDHS (900 aa)). Asn-125 carries an N-linked (GlcNAc...) asparagine glycan. Tyr-173 carries the post-translational modification Sulfotyrosine. N-linked (GlcNAc...) asparagine glycosylation is found at Asn-231, Asn-260, and Asn-316. Position 349–353 (349–353 (GAMEN)) interacts with substrate. His-385 is a binding site for Zn(2+). Catalysis depends on Glu-386, which acts as the Proton acceptor. Residues His-389 and Glu-408 each coordinate Zn(2+). Tyr-416 carries the sulfotyrosine modification. N-linked (GlcNAc...) asparagine glycosylation is found at Asn-508, Asn-569, Asn-624, Asn-680, Asn-734, and Asn-738. 2 cysteine pairs are disulfide-bonded: Cys-760-Cys-767 and Cys-797-Cys-833.

This sequence belongs to the peptidase M1 family. As to quaternary structure, homodimer. Interacts with SLC6A19. Zn(2+) serves as cofactor. Post-translationally, sulfated. N- and O-glycosylated. In terms of processing, may undergo proteolysis and give rise to a soluble form.

It localises to the cell membrane. It carries out the reaction Release of an N-terminal amino acid, Xaa-|-Yaa- from a peptide, amide or arylamide. Xaa is preferably Ala, but may be most amino acids including Pro (slow action). When a terminal hydrophobic residue is followed by a prolyl residue, the two may be released as an intact Xaa-Pro dipeptide.. Its function is as follows. Broad specificity aminopeptidase which plays a role in the final digestion of peptides generated from hydrolysis of proteins by gastric and pancreatic proteases. Also involved in the processing of various peptides including peptide hormones, such as angiotensin III and IV, neuropeptides, and chemokines. May also be involved the cleavage of peptides bound to major histocompatibility complex class II molecules of antigen presenting cells. May have a role in angiogenesis and promote cholesterol crystallization. May have a role in amino acid transport by acting as binding partner of amino acid transporter SLC6A19 and regulating its activity. This Bos taurus (Bovine) protein is Aminopeptidase N (ANPEP).